A 525-amino-acid polypeptide reads, in one-letter code: GMP synthase [glutamine-hydrolyzing] (525 aa).

Residues 8 to 207 (KILILDFGSQ…AVAICGCGTN (200 aa)) form the Glutamine amidotransferase type-1 domain. Catalysis depends on C85, which acts as the Nucleophile. Residues H181 and E183 contribute to the active site. Residues 208–400 (WKPSSIIEDA…LGLPYNMLYR (193 aa)) form the GMPS ATP-PPase domain. 235–241 (SGGVDSS) is an ATP binding site.

In terms of assembly, homodimer.

The catalysed reaction is XMP + L-glutamine + ATP + H2O = GMP + L-glutamate + AMP + diphosphate + 2 H(+). Its pathway is purine metabolism; GMP biosynthesis; GMP from XMP (L-Gln route): step 1/1. In terms of biological role, catalyzes the synthesis of GMP from XMP. In Shewanella denitrificans (strain OS217 / ATCC BAA-1090 / DSM 15013), this protein is GMP synthase [glutamine-hydrolyzing].